Here is a 318-residue protein sequence, read N- to C-terminus: Ornithine carbamoyltransferase (318 aa).

Carbamoyl phosphate contacts are provided by residues 63 to 66, Gln-90, Arg-114, and 141 to 144; these read STRT and HPCQ. L-ornithine-binding positions include Asn-172, Asp-235, and 239-240; that span reads SM. Residues 275–276 and Arg-303 each bind carbamoyl phosphate; that span reads CL.

Belongs to the aspartate/ornithine carbamoyltransferase superfamily. OTCase family.

The protein localises to the cytoplasm. It catalyses the reaction carbamoyl phosphate + L-ornithine = L-citrulline + phosphate + H(+). It participates in amino-acid biosynthesis; L-arginine biosynthesis; L-arginine from L-ornithine and carbamoyl phosphate: step 1/3. In terms of biological role, reversibly catalyzes the transfer of the carbamoyl group from carbamoyl phosphate (CP) to the N(epsilon) atom of ornithine (ORN) to produce L-citrulline. The protein is Ornithine carbamoyltransferase of Prochlorococcus marinus (strain SARG / CCMP1375 / SS120).